The chain runs to 1519 residues: Putative lipoprotein YghJ (1519 aa).

The first 23 residues, 1-23 (MNKKFKYKKSLLAAILSATLLAG), serve as a signal peptide directing secretion. 2 disordered regions span residues 22-107 (AGCD…GATC) and 226-247 (NAATDKAPSTHTSPVVPVTTPG). Cys24 carries the N-palmitoyl cysteine lipid modification. A lipid anchor (S-diacylglycerol cysteine) is attached at Cys24. Residues 31-42 (SSSDTPPVDSGT) show a composition bias toward low complexity. Over residues 51-77 (DPTPNPEPTPEPTPDPEPTPEPIPDPE) the composition is skewed to pro residues. The segment covering 97–107 (GGSQRVTGATC) has biased composition (polar residues). Residues 234–247 (STHTSPVVPVTTPG) are compositionally biased toward low complexity. One can recognise a Peptidase M60 domain in the interval 1080–1380 (GNMQSTGLWA…MYAQLKEWAE (301 aa)). Positions 1497 to 1519 (DLPKPEQGPETINQVTEHKMSAE) are disordered.

It to V.cholerae AcfD (VC_0845).

The protein resides in the cell membrane. Functionally, may be a substrate of the type II secretion system beta (T2SS-beta). This chain is Putative lipoprotein YghJ (yghJ), found in Escherichia coli O78:H11 (strain H10407 / ETEC).